Here is a 465-residue protein sequence, read N- to C-terminus: Argininosuccinate lyase (465 aa).

It belongs to the lyase 1 family. Argininosuccinate lyase subfamily.

It is found in the cytoplasm. It catalyses the reaction 2-(N(omega)-L-arginino)succinate = fumarate + L-arginine. Its pathway is amino-acid biosynthesis; L-arginine biosynthesis; L-arginine from L-ornithine and carbamoyl phosphate: step 3/3. This Clostridium botulinum (strain Eklund 17B / Type B) protein is Argininosuccinate lyase.